The following is a 513-amino-acid chain: ATP synthase subunit alpha (513 aa).

169 to 176 is an ATP binding site; sequence GDRQTGKT.

The protein belongs to the ATPase alpha/beta chains family. As to quaternary structure, F-type ATPases have 2 components, CF(1) - the catalytic core - and CF(0) - the membrane proton channel. CF(1) has five subunits: alpha(3), beta(3), gamma(1), delta(1), epsilon(1). CF(0) has three main subunits: a(1), b(2) and c(9-12). The alpha and beta chains form an alternating ring which encloses part of the gamma chain. CF(1) is attached to CF(0) by a central stalk formed by the gamma and epsilon chains, while a peripheral stalk is formed by the delta and b chains.

The protein localises to the cell inner membrane. The enzyme catalyses ATP + H2O + 4 H(+)(in) = ADP + phosphate + 5 H(+)(out). Functionally, produces ATP from ADP in the presence of a proton gradient across the membrane. The alpha chain is a regulatory subunit. The chain is ATP synthase subunit alpha from Dichelobacter nodosus (strain VCS1703A).